A 156-amino-acid polypeptide reads, in one-letter code: Ecotin (156 aa).

The first 19 residues, 1 to 19 (MKALLIAAGVAALSSTAMA), serve as a signal peptide directing secretion. A disulfide bond links C65 and C102.

It belongs to the protease inhibitor I11 (ecotin) family. In terms of assembly, homodimer.

Its subcellular location is the periplasm. Its function is as follows. General inhibitor of family S1 serine proteases. This is Ecotin from Pseudomonas aeruginosa (strain UCBPP-PA14).